Reading from the N-terminus, the 188-residue chain is Peptide deformylase (188 aa).

Positions 94 and 136 each coordinate Fe cation. Glu-137 is an active-site residue. Position 140 (His-140) interacts with Fe cation.

Belongs to the polypeptide deformylase family. Fe(2+) is required as a cofactor.

It carries out the reaction N-terminal N-formyl-L-methionyl-[peptide] + H2O = N-terminal L-methionyl-[peptide] + formate. In terms of biological role, removes the formyl group from the N-terminal Met of newly synthesized proteins. Requires at least a dipeptide for an efficient rate of reaction. N-terminal L-methionine is a prerequisite for activity but the enzyme has broad specificity at other positions. The chain is Peptide deformylase from Chlorobium phaeobacteroides (strain DSM 266 / SMG 266 / 2430).